Consider the following 260-residue polypeptide: Hemin import ATP-binding protein HmuV (260 aa).

Residues 3-239 enclose the ABC transporter domain; it reads LHAQQISLSI…QRLSEVYGCD (237 aa). ATP is bound at residue 35–42; sequence GPNGSGKS.

Belongs to the ABC transporter superfamily. Heme (hemin) importer (TC 3.A.1.14.5) family. The complex is composed of two ATP-binding proteins (HmuV), two transmembrane proteins (HmuU) and a solute-binding protein (HmuT).

Its subcellular location is the cell inner membrane. In terms of biological role, part of the ABC transporter complex HmuTUV involved in hemin import. Responsible for energy coupling to the transport system. The polypeptide is Hemin import ATP-binding protein HmuV (Ruegeria sp. (strain TM1040) (Silicibacter sp.)).